The primary structure comprises 769 residues: Probable beta-glucosidase M (769 aa).

A signal peptide spans 1–22; sequence MHSNLGLAGLAGLLATASVCLS. 3 N-linked (GlcNAc...) asparagine glycosylation sites follow: Asn-28, Asn-75, and Asn-262. Asp-290 is a catalytic residue. N-linked (GlcNAc...) asparagine glycosylation is found at Asn-318, Asn-325, Asn-437, and Asn-546.

Belongs to the glycosyl hydrolase 3 family.

It is found in the secreted. The enzyme catalyses Hydrolysis of terminal, non-reducing beta-D-glucosyl residues with release of beta-D-glucose.. The protein operates within glycan metabolism; cellulose degradation. Its function is as follows. Beta-glucosidases are one of a number of cellulolytic enzymes involved in the degradation of cellulosic biomass. Catalyzes the last step releasing glucose from the inhibitory cellobiose. This Neosartorya fischeri (strain ATCC 1020 / DSM 3700 / CBS 544.65 / FGSC A1164 / JCM 1740 / NRRL 181 / WB 181) (Aspergillus fischerianus) protein is Probable beta-glucosidase M (bglM).